Consider the following 101-residue polypeptide: Small ribosomal subunit protein uS14 (101 aa).

The protein belongs to the universal ribosomal protein uS14 family. As to quaternary structure, part of the 30S ribosomal subunit. Contacts proteins S3 and S10.

Functionally, binds 16S rRNA, required for the assembly of 30S particles and may also be responsible for determining the conformation of the 16S rRNA at the A site. This chain is Small ribosomal subunit protein uS14, found in Paraburkholderia phymatum (strain DSM 17167 / CIP 108236 / LMG 21445 / STM815) (Burkholderia phymatum).